The sequence spans 244 residues: Probable 2-phosphosulfolactate phosphatase (244 aa).

The protein belongs to the ComB family. The cofactor is Mg(2+).

It catalyses the reaction (2R)-O-phospho-3-sulfolactate + H2O = (2R)-3-sulfolactate + phosphate. The chain is Probable 2-phosphosulfolactate phosphatase from Cyanothece sp. (strain PCC 7425 / ATCC 29141).